Consider the following 811-residue polypeptide: Lysine-specific histone demethylase 1 homolog 3 (811 aa).

A compositionally biased stretch (pro residues) spans methionine 1 to proline 10. Positions methionine 1–serine 79 are disordered. Over residues asparagine 44 to leucine 55 the composition is skewed to basic residues. The segment covering proline 56–serine 71 has biased composition (low complexity). One can recognise an SWIRM domain in the interval asparagine 88–arginine 189. FAD contacts are provided by glutamate 227, arginine 229, arginine 235, and glutamate 609. The tract at residues arginine 790–serine 811 is disordered.

This sequence belongs to the flavin monoamine oxidase family. Requires FAD as cofactor.

Probable histone demethylase. In Oryza sativa subsp. indica (Rice), this protein is Lysine-specific histone demethylase 1 homolog 3.